A 230-amino-acid polypeptide reads, in one-letter code: MAKDVKPTRKNLMQIEDRIELSERGHDTLEKKRDGLIMEFMDILDQAQDVREDLDGSYERAQRAINMARAMEGDVAVRGAAAALKEHPELTTQSKNIMGVVVPQIESSKVRKSLDERGYGVMGTSARIDEAAEAYEELLENIILAAEVETAMKKMLEEIETTKRRVNALEFKLLPDLYDNQEYIEQKLEEQEREEIFRMKKIKAKKEEEEDALAAEEEAEEEPEAVTADD.

The interval 204–230 (AKKEEEEDALAAEEEAEEEPEAVTADD) is disordered. Positions 208–230 (EEEDALAAEEEAEEEPEAVTADD) are enriched in acidic residues.

The protein belongs to the V-ATPase D subunit family. Has multiple subunits with at least A(3), B(3), C, D, E, F, H, I and proteolipid K(x).

Its subcellular location is the cell membrane. In terms of biological role, component of the A-type ATP synthase that produces ATP from ADP in the presence of a proton gradient across the membrane. The polypeptide is A-type ATP synthase subunit D (Haloarcula marismortui (strain ATCC 43049 / DSM 3752 / JCM 8966 / VKM B-1809) (Halobacterium marismortui)).